The sequence spans 379 residues: Cytochrome b (379 aa).

A run of 4 helical transmembrane segments spans residues 33–53 (FGSL…FLAM), 77–98 (WMIR…FMHV), 113–133 (WNIG…GYVL), and 178–198 (FFAF…VHLL). Positions 83 and 97 each coordinate heme b. Positions 182 and 196 each coordinate heme b. Histidine 201 is an a ubiquinone binding site. 4 helical membrane passes run 226–246 (IKDI…VLFS), 288–308 (LGGV…PMLH), 320–340 (LSQC…WIGG), and 347–367 (FITI…XLMP).

This sequence belongs to the cytochrome b family. In terms of assembly, the cytochrome bc1 complex contains 11 subunits: 3 respiratory subunits (MT-CYB, CYC1 and UQCRFS1), 2 core proteins (UQCRC1 and UQCRC2) and 6 low-molecular weight proteins (UQCRH/QCR6, UQCRB/QCR7, UQCRQ/QCR8, UQCR10/QCR9, UQCR11/QCR10 and a cleavage product of UQCRFS1). This cytochrome bc1 complex then forms a dimer. Requires heme b as cofactor.

It is found in the mitochondrion inner membrane. Component of the ubiquinol-cytochrome c reductase complex (complex III or cytochrome b-c1 complex) that is part of the mitochondrial respiratory chain. The b-c1 complex mediates electron transfer from ubiquinol to cytochrome c. Contributes to the generation of a proton gradient across the mitochondrial membrane that is then used for ATP synthesis. The protein is Cytochrome b (MT-CYB) of Chrotogale owstoni (Owston's palm civet).